The sequence spans 221 residues: 7-cyano-7-deazaguanine synthase (221 aa).

Position 12–22 (Phe12–Leu22) interacts with ATP. Zn(2+)-binding residues include Cys190, Cys199, Cys202, and Cys205.

This sequence belongs to the QueC family. In terms of assembly, homodimer. Requires Zn(2+) as cofactor.

The enzyme catalyses 7-carboxy-7-deazaguanine + NH4(+) + ATP = 7-cyano-7-deazaguanine + ADP + phosphate + H2O + H(+). It participates in purine metabolism; 7-cyano-7-deazaguanine biosynthesis. Its function is as follows. Catalyzes the ATP-dependent conversion of 7-carboxy-7-deazaguanine (CDG) to 7-cyano-7-deazaguanine (preQ(0)). The sequence is that of 7-cyano-7-deazaguanine synthase from Clostridium novyi (strain NT).